A 223-amino-acid chain; its full sequence is Lipoprotein-releasing system ATP-binding protein LolD (223 aa).

The 222-residue stretch at I2–A223 folds into the ABC transporter domain. Residue G38–T45 coordinates ATP.

Belongs to the ABC transporter superfamily. Lipoprotein translocase (TC 3.A.1.125) family. The complex is composed of two ATP-binding proteins (LolD) and two transmembrane proteins (LolC and LolE).

It is found in the cell inner membrane. In terms of biological role, part of the ABC transporter complex LolCDE involved in the translocation of mature outer membrane-directed lipoproteins, from the inner membrane to the periplasmic chaperone, LolA. Responsible for the formation of the LolA-lipoprotein complex in an ATP-dependent manner. This is Lipoprotein-releasing system ATP-binding protein LolD from Syntrophus aciditrophicus (strain SB).